The following is a 30-amino-acid chain: Cyclotide mden-E (30 aa).

A cross-link (cyclopeptide (Gly-Asn)) is located at residues 1-30; it reads GIPCGESCVYIPCITAAIGCSCKSKVCYRN. Disulfide bonds link Cys4–Cys20, Cys8–Cys22, and Cys13–Cys27.

This sequence belongs to the cyclotide family. Bracelet subfamily. This is a cyclic peptide.

Functionally, probably participates in a plant defense mechanism. This is Cyclotide mden-E from Melicytus dentatus (Tree violet).